Here is a 110-residue protein sequence, read N- to C-terminus: DNA-binding protein Mlab_1482 (110 aa).

The protein belongs to the PDCD5 family.

The sequence is that of DNA-binding protein Mlab_1482 from Methanocorpusculum labreanum (strain ATCC 43576 / DSM 4855 / Z).